An 806-amino-acid chain; its full sequence is Mitogen-activated protein kinase 7 (806 aa).

Residues 1–23 (MAEPLKEEDGEDGSGEPPGRVKA) form a disordered region. Ala2 is subject to N-acetylalanine. Positions 2–77 (AEPLKEEDGE…VVSSARRRLT (76 aa)) are required for cytoplasmic targeting. The Protein kinase domain occupies 55 to 347 (YEIIETIGNG…AAAALRHPFL (293 aa)). ATP-binding positions include 61–69 (IGNGAYGVV) and Lys84. Residues 78-139 (GQQVAIKKIP…FRSVYVVLDL (62 aa)) form a required for binding to MAP2K5 region. The segment at 140-406 (MESDLHQIIH…QQIRFQPSLQ (267 aa)) is necessary for oligomerization. The Proton acceptor role is filled by Asp182. Residues 219–221 (TEY) carry the TXY motif. The may not be required for kinase activity; required to stimulate MEF2C activity stretch occupies residues 407 to 806 (PVASEPVCPD…LSDLPDLQEP (400 aa)). 2 disordered regions span residues 424 to 473 (APSG…AISD) and 488 to 727 (RSRL…PKGS). Pro residues predominate over residues 433–443 (SPPPALPPCSD). Composition is skewed to basic and acidic residues over residues 502–519 (PEPR…EREE), 527–544 (RAKE…KERG), and 563–573 (DNDRSLLERWT). The Nuclear localization signal motif lies at 505 to 539 (RKPVTAQERQREREEKRRRRQERAKEREKRRQERE). The segment covering 578 to 592 (PPAPAPAPAPAPAPA) has biased composition (pro residues). Residues 593–603 (PSSAQPTSTPT) are compositionally biased toward low complexity. Over residues 627–643 (VCPPPGPVPQPAGPIPA) the composition is skewed to pro residues. Polar residues predominate over residues 647–660 (TAPSTSLLASQSLV). Pro residues predominate over residues 678–689 (PSGPPPPDPGLT). The segment covering 693-710 (STSESPDVNLVTQQLSKS) has biased composition (polar residues). Ser710 bears the Phosphoserine mark. Thr723 carries the post-translational modification Phosphothreonine.

This sequence belongs to the protein kinase superfamily. CMGC Ser/Thr protein kinase family. MAP kinase subfamily. Interacts with MAP2K5. Forms oligomers. Interacts with MEF2A, MEF2C and MEF2D; the interaction phosphorylates the MEF2s and enhances transcriptional activity of MEF2A, MEF2C but not MEF2D. Interacts with SGK1. Interacts with PML. Interacts (via N-terminal half) with HSP90AB1-CDC37 chaperone complex in resting cells; the interaction is MAP2K5-independent and prevents MAPK7 from ubiquitination and proteasomal degradation. Interacts with STUB1/CHIP; the interaction is enhanced in the presence of IGF1 or MAP2K5 and promotes STUB1/CHIP E3 ligase activity. Mg(2+) serves as cofactor. Dually phosphorylated on Thr-219 and Tyr-221, which activates the enzyme. In terms of tissue distribution, detected in testis, brain, kidney, lung and heart. Detected in total embryo (at protein level).

It is found in the cytoplasm. The protein localises to the nucleus. It localises to the PML body. The enzyme catalyses L-seryl-[protein] + ATP = O-phospho-L-seryl-[protein] + ADP + H(+). It catalyses the reaction L-threonyl-[protein] + ATP = O-phospho-L-threonyl-[protein] + ADP + H(+). With respect to regulation, activated by tyrosine and threonine phosphorylation. Activated in response to hyperosmolarity, hydrogen peroxide, and epidermal growth factor (EGF). In terms of biological role, plays a role in various cellular processes such as proliferation, differentiation and cell survival. The upstream activator of MAPK7 is the MAPK kinase MAP2K5. Upon activation, it translocates to the nucleus and phosphorylates various downstream targets including MEF2C. EGF activates MAPK7 through a Ras-independent and MAP2K5-dependent pathway. As part of the MAPK/ERK signaling pathway, acts as a negative regulator of apoptosis in cardiomyocytes via interaction with STUB1/CHIP and promotion of STUB1-mediated ubiquitination and degradation of ICER-type isoforms of CREM. May have a role in muscle cell differentiation. May be important for endothelial function and maintenance of blood vessel integrity. MAP2K5 and MAPK7 interact specifically with one another and not with MEK1/ERK1 or MEK2/ERK2 pathways. Phosphorylates SGK1 at Ser-78 and this is required for growth factor-induced cell cycle progression. Involved in the regulation of p53/TP53 by disrupting the PML-MDM2 interaction. The sequence is that of Mitogen-activated protein kinase 7 (Mapk7) from Mus musculus (Mouse).